The primary structure comprises 341 residues: MMSMNSKQAFSMHPILHEPKYPHLHTSSEAIRRACLPAPQIQGNIFAGFDETLLRGAEALAAVDIVSQKTHPFKPDATYHTMSSVSCTPTSSSVHLHHPSVLTTHHPHHHHHQPAQGLEGELLDHLNSALPLGGVPGPDVGSTPSHPHSHMSAINHMAHHSQPMNMSHPHGLASHAVISGPETETDPRELESFAERFKQRRIKLGVTQADVGSALANLKIPGVGCLSQSTICRFESLTLSHNNMVALKPILEAWLEEAERAQREKMTKPEIYTGGDKKRKRTSIAAPEKRSLEAYFAVQPRPSSEKIAAIAEKLDLKKNVVRVWFCNQRQKQKRMKFSATY.

The short motif at Arg-55–Ile-65 is the POU-IV box element. One can recognise a POU-specific domain in the interval Glu-182–Glu-259. Residues Lys-277–Lys-336 constitute a DNA-binding region (homeobox).

The protein belongs to the POU transcription factor family. Class-4 subfamily.

It is found in the nucleus. May play a role in specifying terminally differentiated neuronal phenotypes. The protein is Brain-specific homeobox/POU domain protein 3 (BRN3) of Gallus gallus (Chicken).